The sequence spans 409 residues: Calsequestrin-2 (409 aa).

A signal peptide spans 1–19; the sequence is MKRAHLFVVGVYLLSSCRA. The residue at position 282 (tyrosine 282) is a Phosphotyrosine. The N-linked (GlcNAc...) asparagine glycan is linked to asparagine 335. The disordered stretch occupies residues 364-409; the sequence is DVLSGKINTEDDDNEDEDDDDDNDDDDDDNGNSDEEDNDDSDEDDE. Positions 373 to 409 are enriched in acidic residues; that stretch reads EDDDNEDEDDDDDNDDDDDDNGNSDEEDNDDSDEDDE.

The protein belongs to the calsequestrin family. Monomer, homodimer and homooligomer. Mostly monomeric in the absence of calcium. Forms higher oligomers in a calcium-dependent manner. Dimers associate to form tetramers, that then form linear homomer chains. Interacts with ASPH and TRDN. In terms of processing, phosphorylation in the C-terminus, probably by CK2, moderately increases calcium buffering capacity. Post-translationally, N-glycosylated. In terms of tissue distribution, detected in heart muscle (at protein level).

Its subcellular location is the sarcoplasmic reticulum lumen. Calsequestrin is a high-capacity, moderate affinity, calcium-binding protein and thus acts as an internal calcium store in muscle. Calcium ions are bound by clusters of acidic residues at the protein surface, especially at the interface between subunits. Can bind around 60 Ca(2+) ions. Regulates the release of lumenal Ca(2+) via the calcium release channel RYR2; this plays an important role in triggering muscle contraction. Plays a role in excitation-contraction coupling in the heart and in regulating the rate of heart beats. In Oryctolagus cuniculus (Rabbit), this protein is Calsequestrin-2 (CASQ2).